A 388-amino-acid chain; its full sequence is MAMVKRNNNTGLIPVSTKQLMALGAAAGASALQGFVRNNGAAIVGKVVDVGQKVYKAVKKRGGKKQQQIKHVGGTGGAIMAPVAVTRQLTGSKPKFTGKTSGSVTVTHREYLSQVNMSTGFQVNGGIVGNLLQLNPLNGTLFSWLPAIASNFDQYSFNSVLLHYVPLCATTEVGRVAMYFDKDSEDPEPADRVELANYSVLAETAPWAERALWVPTDRIKRFCDDSSTLDHKLIDLGQLGVATYGGAGTNAVGDIFISYSVTLYFPQPTNTLLSTRRLDLAGTPVTASGPGYILLTRTPTVLTMTFRATGTFVISGAYRCLTSTVLGLTGGVNVNSITVVDNVGTSSSFFINCTVSNLPSVITFTTTGITSATIQCNRATRQNDVSLI.

The segment at 1-102 (MAMVKRNNNT…KPKFTGKTSG (102 aa)) is r domain, interaction with RNA. The tract at residues 56–61 (KAVKKR) is involved in encapsidation. The interval 103 to 263 (SVTVTHREYL…DIFISYSVTL (161 aa)) is s domain, virion shell. The interval 264–388 (YFPQPTNTLL…ATRQNDVSLI (125 aa)) is p domain, projecting.

Belongs to the icosahedral plant coat protein family. Homomultimer.

The protein resides in the virion. Capsid protein self-assembles to form an icosahedral capsid with a T=3 symmetry, about 32-35 nm in diameter, and consisting of 180 capsid proteins. In Artichoke mottled crinkle virus (AMCV), this protein is Capsid protein.